The primary structure comprises 659 residues: Pheromone-processing carboxypeptidase kex1 (659 aa).

The N-terminal stretch at 1–38 (MAATTTTTNAGRSMASWKRLSTLIAAFTLSWTSSFVAA) is a signal peptide. Residues 39-527 (AGSADYFVHD…EMAKWEAYRK (489 aa)) are Lumenal-facing. S190 is a catalytic residue. N-linked (GlcNAc...) asparagine glycans are attached at residues N218 and N348. Residue D393 is part of the active site. N-linked (GlcNAc...) asparagine glycans are attached at residues N444 and N452. H455 is a catalytic residue. Residues 480 to 507 (IGGQPTDSRLDGEKLPETTVGGAAGNST) are disordered. A glycan (N-linked (GlcNAc...) asparagine) is linked at N505. The chain crosses the membrane as a helical span at residues 528-548 (SGELVLVIVIVAAGVWGWFVW). Residues 549 to 659 (KERRKTAGQG…SSSRQPGGRS (111 aa)) lie on the Cytoplasmic side of the membrane. Positions 565 to 659 (GERHSISNNP…SSSRQPGGRS (95 aa)) are disordered. A compositionally biased stretch (basic and acidic residues) spans 616–630 (DDLHLSKPEDPHADS). A compositionally biased stretch (polar residues) spans 649–659 (GSSSRQPGGRS).

This sequence belongs to the peptidase S10 family.

It localises to the golgi apparatus. It is found in the trans-Golgi network membrane. The enzyme catalyses Preferential release of a C-terminal arginine or lysine residue.. Protease with a carboxypeptidase B-like function involved in the C-terminal processing of the lysine and arginine residues from protein precursors. Promotes cell fusion and is involved in the programmed cell death. The sequence is that of Pheromone-processing carboxypeptidase kex1 (kex1) from Neurospora crassa (strain ATCC 24698 / 74-OR23-1A / CBS 708.71 / DSM 1257 / FGSC 987).